The sequence spans 361 residues: Teichoic acids export ATP-binding protein TagH (361 aa).

The 234-residue stretch at 13-246 (TKEYDLYKSQ…YREFTKWFKG (234 aa)) folds into the ABC transporter domain. 60–67 (GVNGSGKS) lines the ATP pocket. The unknown stretch occupies residues 247-361 (QSKKEKKHFQ…HDTNATSGVK (115 aa)).

Belongs to the ABC transporter superfamily. Teichoic acids exporter (TC 3.A.1.104.1) family. The complex is composed of two ATP-binding proteins (TagH) and two transmembrane proteins (TagG).

It localises to the cell membrane. It catalyses the reaction ATP + H2O + teichoic acidSide 1 = ADP + phosphate + teichoic acidSide 2.. Part of the ABC transporter complex TagGH involved in teichoic acids export. Responsible for energy coupling to the transport system. This Levilactobacillus brevis (strain ATCC 367 / BCRC 12310 / CIP 105137 / JCM 1170 / LMG 11437 / NCIMB 947 / NCTC 947) (Lactobacillus brevis) protein is Teichoic acids export ATP-binding protein TagH.